The sequence spans 197 residues: Protein GrpE (197 aa).

The tract at residues 1 to 39 (MSSKEQKTPEGQAPEEIIMDQHEEIEAVEPEASAEQVDP) is disordered.

It belongs to the GrpE family. In terms of assembly, homodimer.

It localises to the cytoplasm. Functionally, participates actively in the response to hyperosmotic and heat shock by preventing the aggregation of stress-denatured proteins, in association with DnaK and GrpE. It is the nucleotide exchange factor for DnaK and may function as a thermosensor. Unfolded proteins bind initially to DnaJ; upon interaction with the DnaJ-bound protein, DnaK hydrolyzes its bound ATP, resulting in the formation of a stable complex. GrpE releases ADP from DnaK; ATP binding to DnaK triggers the release of the substrate protein, thus completing the reaction cycle. Several rounds of ATP-dependent interactions between DnaJ, DnaK and GrpE are required for fully efficient folding. This chain is Protein GrpE, found in Escherichia coli O127:H6 (strain E2348/69 / EPEC).